The sequence spans 471 residues: Putative multidrug resistance protein MdtD (471 aa).

Over 1 to 11 the chain is Periplasmic; the sequence is MTDLPDSTRWQ. Residues 12–32 traverse the membrane as a helical segment; the sequence is LWIVAFGFFMQSLDTTIVNTA. Over 33–48 the chain is Cytoplasmic; that stretch reads LPSMAQSLGESPLHMH. A helical membrane pass occupies residues 49 to 69; it reads MVIVSYVLTVAVMLPASGWLA. At 70 to 76 the chain is on the periplasmic side; sequence DKVGVRN. The chain crosses the membrane as a helical span at residues 77–97; sequence IFFTAIVLFTLGSLFCALSGT. The Cytoplasmic segment spans residues 98–101; it reads LNEL. A helical transmembrane segment spans residues 102-124; that stretch reads LLARALQGVGGAMMVPVGRLTVM. The Periplasmic portion of the chain corresponds to 125 to 137; it reads KIVPREQYMAAMT. The helical transmembrane segment at 138 to 158 threads the bilayer; the sequence is FVTLPGQIGPLLGPALGGLLV. The Cytoplasmic segment spans residues 159–164; sequence EYASWH. Residues 165–185 traverse the membrane as a helical segment; that stretch reads WIFLINIPVGIIGAIATLMLM. Over 186–196 the chain is Periplasmic; that stretch reads PNYTMQTRRFD. A helical membrane pass occupies residues 197 to 217; sequence LSGFLLLAVGMAVLTLALDGS. The Cytoplasmic portion of the chain corresponds to 218-224; sequence KGTGFSP. Residues 225-245 traverse the membrane as a helical segment; that stretch reads LAIAGLVAVGVVALVLYLLHA. The Periplasmic segment spans residues 246–262; sequence QNNNRALFSLKLFRTRT. Residues 263-283 traverse the membrane as a helical segment; the sequence is FSLGLAGSFAGRIGSGMLPFM. Residues 284-285 lie on the Cytoplasmic side of the membrane; it reads TP. Residues 286–306 form a helical membrane-spanning segment; sequence VFLQIGLGFSPFHAGLMMIPM. Topologically, residues 307–341 are periplasmic; the sequence is VLGSMGMKRIVVQVVNRFGYRWVLVATTLGLSLVT. A helical transmembrane segment spans residues 342–362; sequence LLFMTTALLGWYYVLPFVLFL. The Cytoplasmic portion of the chain corresponds to 363–395; that stretch reads QGMVNSTRFSSMNTLTLKDLPDNLASSGNSLLS. Residues 396-416 traverse the membrane as a helical segment; sequence MIMQLSMSIGVTIAGLLLGLF. Residues 417-430 are Periplasmic-facing; sequence GSQHVSVDSGTTQT. A helical membrane pass occupies residues 431–451; that stretch reads VFMYTWLSMAFIIALPAFVFA. The Cytoplasmic segment spans residues 452 to 471; the sequence is RVPSDTHQNVAISRRKRSAQ.

This sequence belongs to the major facilitator superfamily. TCR/Tet family.

Its subcellular location is the cell inner membrane. The protein is Putative multidrug resistance protein MdtD of Escherichia coli O81 (strain ED1a).